Reading from the N-terminus, the 178-residue chain is uncharacterized protein (178 aa).

Residues 7 to 29 (FFVIFSILWGSLFLFSIIGSLGT) traverse the membrane as a helical segment.

The protein resides in the membrane. This is an uncharacterized protein from Bacillus subtilis (strain 168).